The following is a 555-amino-acid chain: Developmental and secondary metabolism regulator veA (555 aa).

Disordered regions lie at residues 1-23 (MATR…RITR), 39-60 (ERAR…VDPP), and 234-533 (RRRG…TLLS). Over residues 13–23 (ETEHSVSRITR) the composition is skewed to basic and acidic residues. In terms of domain architecture, Velvet spans 25–228 (GKRITYKLNV…AEQGCRVRIR (204 aa)). The Nuclear localization signal signature appears at 39–44 (ERARAC). The span at 239–258 (KRSDDYDFDEERSHRGRIPD) shows a compositional bias: basic and acidic residues. Pro residues predominate over residues 311–331 (AIPPAPAPAPPSSSTPTPVAP). Polar residues-rich tracts occupy residues 336–372 (RSSS…TQVY) and 380–389 (HARNPSTSTE). The tract at residues 439-479 (QTPSNAAPSLPPIASISAEYSNNLPQPPSNLAPSPNREPRG) is PEST. 2 stretches are compositionally biased toward basic and acidic residues: residues 492-503 (RPHEDAFSHSER) and 519-533 (ADRR…TLLS).

It belongs to the velvet family. VeA subfamily. Component of the heterotrimeric velvet complex composed of laeA, veA and velB; VeA acting as a bridging protein between laeA and velB.

The protein localises to the nucleus. Its subcellular location is the cytoplasm. In terms of biological role, component of the velvet transcription factor complex that controls sexual/asexual developmental ratio in response to light, promoting sexual development in the darkness while stimulating asexual sporulation under illumination. The velvet complex hat acts as a global regulator for secondary metabolite gene expression. Increases spore dispersing capacity by impacting conidiophore architecture. The sequence is that of Developmental and secondary metabolism regulator veA from Aspergillus niger (strain ATCC 1015 / CBS 113.46 / FGSC A1144 / LSHB Ac4 / NCTC 3858a / NRRL 328 / USDA 3528.7).